The following is a 160-amino-acid chain: Cyanate hydratase (160 aa).

Catalysis depends on residues R100, E103, and S126.

Belongs to the cyanase family.

It carries out the reaction cyanate + hydrogencarbonate + 3 H(+) = NH4(+) + 2 CO2. Catalyzes the reaction of cyanate with bicarbonate to produce ammonia and carbon dioxide. In Penicillium rubens (strain ATCC 28089 / DSM 1075 / NRRL 1951 / Wisconsin 54-1255) (Penicillium chrysogenum), this protein is Cyanate hydratase.